We begin with the raw amino-acid sequence, 783 residues long: Cell wall transcription factor ACE2 (783 aa).

Disordered stretches follow at residues A166–D195, E219–Y311, Y355–N452, A474–L497, and N535–R624. Composition is skewed to polar residues over residues G183 to L193, Q227 to M254, K302 to Y311, and Y355 to S371. Low complexity predominate over residues Q372–N395. Positions I420–E431 are enriched in polar residues. 2 stretches are compositionally biased toward low complexity: residues P483–L497 and N535–Q544. Positions T545–G575 are enriched in polar residues. 2 C2H2-type zinc fingers span residues Y649–H673 and F679–H701.

Its subcellular location is the nucleus. In terms of biological role, transcription factor involved in the RAM (regulation of ACE2 transcription factor and polarized morphogenesis) signaling network that regulates polarized morphogenesis. Regulates expression of genes involved in cell separation such as CHT3, DSE1, and SCW11; or other cell wall genes such as ASH1, DSE4, PIR1, PRY2, and RME1. Required for regulation of morphogenesis, cell separation, adherence, biofilm formation, invasion, as well as virulence in a mouse model of infection. In Candida albicans (strain SC5314 / ATCC MYA-2876) (Yeast), this protein is Cell wall transcription factor ACE2 (ACE2).